We begin with the raw amino-acid sequence, 157 residues long: NADPH-dependent 7-cyano-7-deazaguanine reductase (157 aa).

Catalysis depends on cysteine 55, which acts as the Thioimide intermediate. Catalysis depends on aspartate 62, which acts as the Proton donor. Residues 77 to 79 and 96 to 97 each bind substrate; these read VES and HE.

It belongs to the GTP cyclohydrolase I family. QueF type 1 subfamily.

The protein resides in the cytoplasm. The catalysed reaction is 7-aminomethyl-7-carbaguanine + 2 NADP(+) = 7-cyano-7-deazaguanine + 2 NADPH + 3 H(+). It participates in tRNA modification; tRNA-queuosine biosynthesis. Functionally, catalyzes the NADPH-dependent reduction of 7-cyano-7-deazaguanine (preQ0) to 7-aminomethyl-7-deazaguanine (preQ1). This chain is NADPH-dependent 7-cyano-7-deazaguanine reductase, found in Neisseria meningitidis serogroup B (strain ATCC BAA-335 / MC58).